Consider the following 231-residue polypeptide: ATP-dependent dethiobiotin synthetase BioD 2 (231 aa).

Residue 13-18 participates in ATP binding; sequence SVGKTV. T17 provides a ligand contact to Mg(2+). The active site involves K38. ATP is bound by residues D55, 112-115, 172-173, 201-203, and Q208; these read EGTG, NR, and PYL. The Mg(2+) site is built by D55 and E112.

This sequence belongs to the dethiobiotin synthetase family. As to quaternary structure, homodimer. Mg(2+) serves as cofactor.

The protein resides in the cytoplasm. It catalyses the reaction (7R,8S)-7,8-diammoniononanoate + CO2 + ATP = (4R,5S)-dethiobiotin + ADP + phosphate + 3 H(+). Its pathway is cofactor biosynthesis; biotin biosynthesis; biotin from 7,8-diaminononanoate: step 1/2. Functionally, catalyzes a mechanistically unusual reaction, the ATP-dependent insertion of CO2 between the N7 and N8 nitrogen atoms of 7,8-diaminopelargonic acid (DAPA, also called 7,8-diammoniononanoate) to form a ureido ring. The sequence is that of ATP-dependent dethiobiotin synthetase BioD 2 from Escherichia coli O157:H7.